Here is a 293-residue protein sequence, read N- to C-terminus: Small ribosomal subunit protein uS5 (293 aa).

A disordered region spans residues methionine 1 to glutamate 56. Alanine 2 carries the N-acetylalanine modification. Positions alanine 7 to arginine 34 are enriched in gly residues. Basic residues predominate over residues glycine 35 to arginine 51. Residues lysine 54 and lysine 58 each participate in a glycyl lysine isopeptide (Lys-Gly) (interchain with G-Cter in ubiquitin) cross-link. The S5 DRBM domain occupies leucine 102–valine 165. A Phosphothreonine modification is found at threonine 252. Lysine 263 carries the N6-acetyllysine modification. Residue serine 264 is modified to Phosphoserine. Threonine 270 carries the phosphothreonine modification. The residue at position 275 (lysine 275) is an N6-acetyllysine; alternate. A Glycyl lysine isopeptide (Lys-Gly) (interchain with G-Cter in SUMO1); alternate cross-link involves residue lysine 275. Lysine 275 is covalently cross-linked (Glycyl lysine isopeptide (Lys-Gly) (interchain with G-Cter in SUMO2); alternate). A Glycyl lysine isopeptide (Lys-Gly) (interchain with G-Cter in ubiquitin); alternate cross-link involves residue lysine 275. Serine 281 carries the post-translational modification Phosphoserine.

Belongs to the universal ribosomal protein uS5 family. In terms of assembly, component of the small ribosomal subunit. Interacts with zinc finger protein ZNF277 (via zinc-finger domains); the interaction is direct; the interaction is extra-ribosomal. Interaction with ZNF277 competes with the binding of RPS2 to protein arginine methyltransferase PRMT3. Post-translationally, citrullinated by PADI4 in the Arg/Gly-rich region. In terms of processing, asymmetric arginine dimethylation by PRMT3 occurs at multiple sites in the Arg/Gly-rich region. Monoubiquitinated at Lys-54 and Lys-58 by RNF10 when a ribosome has stalled during translation, leading to its degradation by the proteasome. Deubiquitinated at Lys-54 and Lys-58 by USP10, preventing degradation by the proteasome and promoting 40S ribosome subunit recycling following ribosome dissociation.

The protein localises to the cytoplasm. The protein resides in the nucleus. Its subcellular location is the nucleolus. Functionally, component of the ribosome, a large ribonucleoprotein complex responsible for the synthesis of proteins in the cell. The small ribosomal subunit (SSU) binds messenger RNAs (mRNAs) and translates the encoded message by selecting cognate aminoacyl-transfer RNA (tRNA) molecules. The large subunit (LSU) contains the ribosomal catalytic site termed the peptidyl transferase center (PTC), which catalyzes the formation of peptide bonds, thereby polymerizing the amino acids delivered by tRNAs into a polypeptide chain. The nascent polypeptides leave the ribosome through a tunnel in the LSU and interact with protein factors that function in enzymatic processing, targeting, and the membrane insertion of nascent chains at the exit of the ribosomal tunnel. Plays a role in the assembly and function of the 40S ribosomal subunit. Mutations in this protein affects the control of translational fidelity. Involved in nucleolar processing of pre-18S ribosomal RNA and ribosome assembly. This is Small ribosomal subunit protein uS5 (RPS2) from Bos taurus (Bovine).